Consider the following 2348-residue polypeptide: Transcription factor HIVEP3 (2348 aa).

A disordered region spans residues methionine 1–histidine 105. Residues isoleucine 27–lysine 72 are compositionally biased toward polar residues. 2 C2H2-type zinc fingers span residues tyrosine 185 to histidine 207 and tyrosine 213 to histidine 235. Residues tyrosine 185–histidine 235 form a ZAS1 region. The segment at isoleucine 204–proline 1055 is no DNA binding activity or transactivation activity, but complete prevention of TRAF-dependent NF-Kappa-B activation; associates with TRAF2 and JUN. 3 disordered regions span residues isoleucine 239–asparagine 401, aspartate 475–arginine 532, and alanine 561–glycine 628. The tract at residues glutamate 257 to glutamate 280 is acidic 1. Over residues glutamate 264–threonine 281 the composition is skewed to acidic residues. Over residues proline 298–serine 323 the composition is skewed to low complexity. The span at serine 338 to threonine 352 shows a compositional bias: basic and acidic residues. 2 stretches are compositionally biased toward polar residues: residues threonine 372 to asparagine 401 and threonine 485 to serine 495. Low complexity-rich tracts occupy residues glutamine 513–proline 527 and proline 589–aspartate 605. Residues proline 606 to lysine 623 are compositionally biased toward basic and acidic residues. Residues glycine 633–glutamine 663 form a CCHC HIVEP-type zinc finger. Disordered regions lie at residues lysine 692–threonine 1098, leucine 1229–proline 1274, glutamate 1386–glutamate 1427, serine 1441–aspartate 1555, and glutamate 1654–alanine 1694. The segment covering serine 736–serine 749 has biased composition (low complexity). The tract at residues glutamate 844 to glutamate 865 is acidic 2. Residues glutamate 845–glutamate 865 show a composition bias toward basic and acidic residues. The Nuclear localization signal motif lies at proline 885–arginine 891. Positions alanine 893 to alanine 929 are enriched in low complexity. The segment covering serine 930–alanine 939 has biased composition (basic and acidic residues). Polar residues-rich tracts occupy residues serine 975 to serine 985, threonine 1062 to threonine 1073, and serine 1247 to isoleucine 1256. Residues methionine 1409 to serine 1433 are a coiled coil. 3 stretches are compositionally biased toward basic and acidic residues: residues arginine 1416–glutamate 1427, threonine 1442–histidine 1452, and valine 1518–threonine 1527. Low complexity predominate over residues leucine 1538 to proline 1547. Residues serine 1665 to alanine 1694 show a composition bias toward basic and acidic residues. 2 consecutive C2H2-type zinc fingers follow at residues tyrosine 1720–histidine 1742 and tyrosine 1748–histidine 1772. The tract at residues tyrosine 1720–histidine 1772 is ZAS2. The acidic 3 stretch occupies residues glutamate 1783 to glutamate 1841. Disordered regions lie at residues glutamate 1786–glycine 1990 and proline 2009–proline 2038. Over residues aspartate 1815–aspartate 1840 the composition is skewed to acidic residues. The span at proline 1871–threonine 1902 shows a compositional bias: polar residues. 5 consecutive repeat copies span residues threonine 1897 to arginine 1900, serine 1927 to arginine 1930, serine 1933 to lysine 1936, serine 1961 to arginine 1964, and serine 2024 to arginine 2027. The segment covering lysine 1952–serine 1961 has biased composition (polar residues). Positions serine 2053–leucine 2148 are 5 X 4 AA tandem repeats of [ST]-P-X-[RK]. Disordered regions lie at residues serine 2184–glutamine 2265 and lysine 2284–isoleucine 2348. Positions serine 2203 to lysine 2216 are enriched in low complexity. Over residues arginine 2293–leucine 2314 the composition is skewed to polar residues.

Interacts with TRAF1 and TRAF2 as well as with JUN. Forms a multimeric complex with RUNX2 and E3 ubiquitin ligase WWP1. Phosphorylated on threonine and serine residues. Phosphorylation by cyclin-dependent kinase CDK1 decreases HIVEP3 DNA binding affinity, and by epidermal growth factor receptor kinase increases its DNA binding affinity. Expressed in macrophages, lymphocytes, brain, thymus, spleen and bone marrow. Expressed in osteoblasts, whole bone and, to a lesser extent, in osteoclasts.

Its subcellular location is the cytoplasm. It localises to the nucleus. In terms of biological role, plays a role of transcription factor; binds to recognition signal sequences (Rss heptamer) for somatic recombination of immunoglobulin and T-cell receptor gene segments; Also binds to the kappa-B motif of gene such as S100A4, involved in cell progression and differentiation. Kappa-B motif is a gene regulatory element found in promoters and enhancers of genes involved in immunity, inflammation, and growth and that responds to viral antigens, mitogens, and cytokines. Involvement of HIVEP3 in cell growth is strengthened by the fact that its down-regulation promotes cell cycle progression with ultimate formation of multinucleated giant cells. Strongly inhibits TNF-alpha-induced NF-kappa-B activation; Interferes with nuclear factor NF-kappa-B by several mechanisms: as transcription factor, by competing for Kappa-B motif and by repressing transcription in the nucleus; through a non transcriptional process, by inhibiting nuclear translocation of RELA by association with TRAF2, an adapter molecule in the tumor necrosis factor signaling, which blocks the formation of IKK complex. Interaction with TRAF proteins inhibits both NF-Kappa-B-mediated and c-Jun N-terminal kinase/JNK-mediated responses that include apoptosis and pro-inflammatory cytokine gene expression. Positively regulates the expression of IL2 in T-cell. Essential regulator of adult bone formation. This Mus musculus (Mouse) protein is Transcription factor HIVEP3 (Hivep3).